The following is a 369-amino-acid chain: Large ribosomal subunit protein uL4 (369 aa).

An N-acetylthreonine modification is found at Thr2.

The protein belongs to the universal ribosomal protein uL4 family.

This Dictyostelium discoideum (Social amoeba) protein is Large ribosomal subunit protein uL4 (rpl4).